The sequence spans 224 residues: Deoxyribose-phosphate aldolase (224 aa).

Aspartate 92 (proton donor/acceptor) is an active-site residue. Catalysis depends on lysine 154, which acts as the Schiff-base intermediate with acetaldehyde. The Proton donor/acceptor role is filled by lysine 183.

The protein belongs to the DeoC/FbaB aldolase family. DeoC type 1 subfamily.

Its subcellular location is the cytoplasm. The enzyme catalyses 2-deoxy-D-ribose 5-phosphate = D-glyceraldehyde 3-phosphate + acetaldehyde. Its pathway is carbohydrate degradation; 2-deoxy-D-ribose 1-phosphate degradation; D-glyceraldehyde 3-phosphate and acetaldehyde from 2-deoxy-alpha-D-ribose 1-phosphate: step 2/2. Its function is as follows. Catalyzes a reversible aldol reaction between acetaldehyde and D-glyceraldehyde 3-phosphate to generate 2-deoxy-D-ribose 5-phosphate. In Actinobacillus succinogenes (strain ATCC 55618 / DSM 22257 / CCUG 43843 / 130Z), this protein is Deoxyribose-phosphate aldolase.